Reading from the N-terminus, the 317-residue chain is NF-kappa-B inhibitor alpha (317 aa).

Residues methionine 1 to aspartate 39 form a disordered region. The span at glycine 15 to aspartate 39 shows a compositional bias: basic and acidic residues. Residue lysine 21 forms a Glycyl lysine isopeptide (Lys-Gly) (interchain with G-Cter in SUMO); alternate linkage. Residue lysine 21 forms a Glycyl lysine isopeptide (Lys-Gly) (interchain with G-Cter in ubiquitin); alternate linkage. A Glycyl lysine isopeptide (Lys-Gly) (interchain with G-Cter in ubiquitin) cross-link involves residue lysine 22. The Destruction motif motif lies at histidine 30–serine 36. Serine 32 is modified (phosphoserine; by IKKA and IKKE). Phosphoserine; by IKKA, IKKB, IKKE and TBK1 is present on serine 36. Residue tyrosine 42 is modified to Phosphotyrosine; by Tyr-kinases. Residues methionine 45–leucine 54 carry the Nuclear export signal motif. ANK repeat units lie at residues aspartate 73–phenylalanine 103, leucine 110–leucine 139, arginine 143–leucine 172, asparagine 182–alanine 211, and asparagine 216–arginine 245. The short motif at leucine 110–isoleucine 120 is the Nuclear import signal element. Asparagine 210 and asparagine 244 each carry (3S)-3-hydroxyasparagine; by HIF1AN; partial. A phosphoserine; by CK2 mark is found at serine 283 and serine 288. Residue threonine 291 is modified to Phosphothreonine; by CK2. Serine 293 bears the Phosphoserine; by CK2 mark. Phosphothreonine; by CK2 is present on threonine 299.

Belongs to the NF-kappa-B inhibitor family. As to quaternary structure, interacts with RELA; the interaction requires the nuclear import signal. Part of a 70-90 kDa complex at least consisting of CHUK, IKBKB, NFKBIA, RELA, ELP1 and MAP3K14. Interacts with NKIRAS1 and NKIRAS2. Interacts with isoform 1 and isoform 2 of RWDD3; the interaction enhances sumoylation. Interacts with PRMT2. Interacts with PRKACA in platelets; this interaction is disrupted by thrombin and collagen. Interacts with MEFV. Interacts with DDRGK1; positively regulates NFKBIA phosphorylation and degradation. Interacts with HNRNPA2B1; the interaction may be mediated by the RRM2 domain of HNRNPA2B1, and HNRNPA2B1 may interact simultaneously with FAM76B and either NFKBIA or NFKBIE to form a complex. In terms of assembly, (Microbial infection) Interacts with HBV protein X. In terms of processing, phosphorylated at Ser-32 and Ser-36 by IKKA/CHUK and IKKB/IKBKB; disables inhibition of NF-kappa-B DNA-binding activity. Phosphorylation at positions 32 and 36 is prerequisite to recognition by the SCF(FBXW11) and SCF(BTRC) complexes, leading to polyubiquitination and subsequent degradation. Phosphorylated at Ser-32 in response to FK506 treatment: phosphorylation is independent of IKKA/CHUK and IKKB/IKBKB and promotes NFKBIA degradation, followed by NF-kappa-B activation. Phosphorylated at Tyr-42: its effect is however unclear. According to a report, phosphorylation at Tyr-42 activates NF-kappa-B without triggering proteolytic degradation of NFKBIA. According to another publication, phosphorylation at Tyr-42 inhibits NF-kappa-B activity by preventing phosphorylation at Ser-32 and Ser-36 and subsequent ubiquitination and degradation. Polyubiquitinated at Lys-21 and/or Lys-22 following phosphorylation at Ser-32 and Ser-36. Monoubiquitinated at Lys-21 and/or Lys-22 by UBE2D3. Ubiquitin chain elongation is then performed by CDC34 in cooperation with the SCF(FBXW11) E3 ligase complex, building ubiquitin chains from the UBE2D3-primed NFKBIA-linked ubiquitin. The resulting polyubiquitination leads to protein degradation. Also ubiquitinated by the SCF(BTRC) complex following stimulus-dependent phosphorylation at Ser-32 and Ser-36. Deubiquitinated by USP38, leading to NF-kappa-B inhibition. Post-translationally, sumoylated; sumoylation requires the presence of the nuclear import signal. Sumoylation blocks ubiquitination and proteasome-mediated degradation of the protein thereby increasing the protein stability. In terms of processing, hydroxylated by HIF1AN. (Microbial infection) Deubiquitinated by porcine reproductive and respiratory syndrome virus Nsp2 protein, which thereby interferes with NFKBIA degradation and impairs subsequent NF-kappa-B activation.

It is found in the cytoplasm. The protein resides in the nucleus. In terms of biological role, inhibits the activity of dimeric NF-kappa-B/REL complexes by trapping REL (RELA/p65 and NFKB1/p50) dimers in the cytoplasm by masking their nuclear localization signals. On cellular stimulation by immune and pro-inflammatory responses, becomes phosphorylated promoting ubiquitination and degradation, enabling the dimeric RELA to translocate to the nucleus and activate transcription. The polypeptide is NF-kappa-B inhibitor alpha (NFKBIA) (Homo sapiens (Human)).